Reading from the N-terminus, the 102-residue chain is Protein PDF (102 aa).

The signal sequence occupies residues 1–24 (MARYTYLVALVLLAICCQWGYCGA). Alanine 100 bears the Alanine amide mark.

This sequence belongs to the arthropod PDH family. As to expression, predominantly expressed in adult head. Expressed at higher level in males than in females. In adult brain, it is specifically expressed in the ventral lateral neurons (LNvs) as well as in 2-4 tritocerebral cells and 4-6 abdominal cells.

It localises to the secreted. In terms of biological role, neuropeptide PDF is the main transmitter regulating circadian locomotor rhythms. Required to maintain behavioral rhythms under constant conditions by coordinating pacemaker interactions in the circadian system. Together with CCHa1, involved in regulating intensity and periodicity of daytime activity, possibly by modulating rhythmic expression of circadian protein PER/period in a subset of clock neurons, but not TIM/timeless. Acts on small and large ventral lateral neurons to control sleep and regulates the state transition from sleep to wake. The protein is Protein PDF (Pdf) of Drosophila melanogaster (Fruit fly).